Consider the following 507-residue polypeptide: Beta-glucosidase 12 (507 aa).

Positions 1 to 22 are cleaved as a signal peptide; that stretch reads MRTIYLSLLVFIIVLALNEVMA. Position 50 (Gln-50) interacts with a beta-D-glucoside. Asn-81 carries an N-linked (GlcNAc...) asparagine glycan. A beta-D-glucoside is bound by residues His-154 and 199–200; that span reads NE. Glu-200 serves as the catalytic Proton donor. Cys-219 and Cys-227 are oxidised to a cystine. Residue Asn-226 is glycosylated (N-linked (GlcNAc...) asparagine). Tyr-344 contacts a beta-D-glucoside. Asn-358 is a glycosylation site (N-linked (GlcNAc...) asparagine). Residues Glu-414, Trp-459, 466-467, and Phe-475 contribute to the a beta-D-glucoside site; that span reads EW. Glu-414 serves as the catalytic Nucleophile.

It belongs to the glycosyl hydrolase 1 family.

It carries out the reaction Hydrolysis of terminal, non-reducing beta-D-glucosyl residues with release of beta-D-glucose.. The polypeptide is Beta-glucosidase 12 (Arabidopsis thaliana (Mouse-ear cress)).